Consider the following 372-residue polypeptide: L-lysine 4-hydroxylase (372 aa).

Residues H176, E178, and H312 each coordinate Fe cation.

This sequence belongs to the clavaminate synthase family. The cofactor is Fe(2+).

The enzyme catalyses L-lysine + 2-oxoglutarate + O2 = (4R)-4-hydroxy-L-lysine + succinate + CO2. Functionally, alpha-ketoglutarate-dependent dioxygenase that in vitro catalyzes the regio- and stereoselective hydroxylation of L-lysine, leading to (4R)-4-hydroxy-L-lysine. The chain is L-lysine 4-hydroxylase from Flavobacterium sp. (strain CF136).